Consider the following 458-residue polypeptide: UDP-N-acetylmuramoylalanine--D-glutamate ligase (458 aa).

Residue 118–124 (GTNGKTT) participates in ATP binding.

Belongs to the MurCDEF family.

The protein resides in the cytoplasm. It carries out the reaction UDP-N-acetyl-alpha-D-muramoyl-L-alanine + D-glutamate + ATP = UDP-N-acetyl-alpha-D-muramoyl-L-alanyl-D-glutamate + ADP + phosphate + H(+). The protein operates within cell wall biogenesis; peptidoglycan biosynthesis. Its function is as follows. Cell wall formation. Catalyzes the addition of glutamate to the nucleotide precursor UDP-N-acetylmuramoyl-L-alanine (UMA). The polypeptide is UDP-N-acetylmuramoylalanine--D-glutamate ligase (Ligilactobacillus salivarius (strain UCC118) (Lactobacillus salivarius)).